The sequence spans 452 residues: Chromosomal replication initiator protein DnaA (452 aa).

Residues 1–72 (MPDMLTLWTD…LVEYAYQAAH (72 aa)) form a domain I, interacts with DnaA modulators region. Residues 72–114 (HEDIQPVLILENERQQQATLKAKTAPVAAGEPVEPTPTFMKET) form a domain II region. The interval 115–331 (ALNSRYTFDT…GALARVQAYS (217 aa)) is domain III, AAA+ region. ATP contacts are provided by Gly159, Gly161, Lys162, and Thr163. The tract at residues 332-452 (QLMHQPIATD…IDSLKDDLRR (121 aa)) is domain IV, binds dsDNA.

This sequence belongs to the DnaA family. Oligomerizes as a right-handed, spiral filament on DNA at oriC.

The protein localises to the cytoplasm. Plays an essential role in the initiation and regulation of chromosomal replication. ATP-DnaA binds to the origin of replication (oriC) to initiate formation of the DNA replication initiation complex once per cell cycle. Binds the DnaA box (a 9 base pair repeat at the origin) and separates the double-stranded (ds)DNA. Forms a right-handed helical filament on oriC DNA; dsDNA binds to the exterior of the filament while single-stranded (ss)DNA is stabiized in the filament's interior. The ATP-DnaA-oriC complex binds and stabilizes one strand of the AT-rich DNA unwinding element (DUE), permitting loading of DNA polymerase. After initiation quickly degrades to an ADP-DnaA complex that is not apt for DNA replication. Binds acidic phospholipids. In Levilactobacillus brevis (strain ATCC 367 / BCRC 12310 / CIP 105137 / JCM 1170 / LMG 11437 / NCIMB 947 / NCTC 947) (Lactobacillus brevis), this protein is Chromosomal replication initiator protein DnaA.